A 298-amino-acid polypeptide reads, in one-letter code: MSIKHHPLQGALWMLTAGLAFAIVNSVAQYASIQFGLPSTTVALVQYAIAIVVILPYLKTLGIRQSLRTQQFGWHLLRVFLAVIGIQLWLWALAYPVPIWQGIALLMTSPLFATIGSGLWLREKVGMARWVATLTGFIGAMIILEPWADDFNLASLLPVGAAFFWASYSLMVKKLSSHDSPSTMVVYLLLLITPFNLLLALPDWQMPNGQTVWLLLIGAGVMTALAQWAIAKAYAVADASFVQPFDHAKLPLNVLAGWLVFGWVPPGRLWLGAAIIVLSVAFITQWETKKSRRERNIA.

A run of 9 helical transmembrane segments spans residues 8-28 (LQGA…NSVA), 35-55 (FGLP…VVIL), 79-99 (VFLA…PVPI), 101-121 (QGIA…GLWL), 125-145 (VGMA…IILE), 151-171 (FNLA…YSLM), 184-204 (MVVY…LPDW), 211-231 (TVWL…WAIA), and 258-278 (WLVF…IIVL). EamA domains lie at 10-144 (GALW…MIIL) and 156-284 (LLPV…AFIT).

The protein belongs to the drug/metabolite transporter (DMT) superfamily. 10 TMS drug/metabolite exporter (DME) (TC 2.A.7.3) family.

Its subcellular location is the cell membrane. Its function is as follows. Transports riboflavin into the cell. This is Riboflavin transporter from Vibrio cholerae serotype O1 (strain ATCC 39315 / El Tor Inaba N16961).